A 143-amino-acid chain; its full sequence is Large ribosomal subunit protein uL11 (143 aa).

This sequence belongs to the universal ribosomal protein uL11 family. In terms of assembly, part of the ribosomal stalk of the 50S ribosomal subunit. Interacts with L10 and the large rRNA to form the base of the stalk. L10 forms an elongated spine to which L12 dimers bind in a sequential fashion forming a multimeric L10(L12)X complex. Post-translationally, one or more lysine residues are methylated.

In terms of biological role, forms part of the ribosomal stalk which helps the ribosome interact with GTP-bound translation factors. The protein is Large ribosomal subunit protein uL11 of Chromobacterium violaceum (strain ATCC 12472 / DSM 30191 / JCM 1249 / CCUG 213 / NBRC 12614 / NCIMB 9131 / NCTC 9757 / MK).